Here is a 106-residue protein sequence, read N- to C-terminus: Apovitellenin-1 (106 aa).

Positions 1 to 24 (MVQYRALVIAVILLLSTTVPEVHS) are cleaved as a signal peptide.

Belongs to the apovitellenin family. Homodimer; disulfide-linked. In terms of tissue distribution, produced by the liver, secreted into the blood and then sequestred by receptor mediated endocytosis into growing oocytes.

Functionally, protein component of the very low density lipoprotein (VLDL) of egg-laying females. Potent lipoprotein lipase inhibitor, preventing the loss of triglycerides from VLDL on their way from the liver to the growing oocytes. In Gallus gallus (Chicken), this protein is Apovitellenin-1.